The sequence spans 111 residues: Putative gamma-glutamylcyclotransferase BH1612 (111 aa).

Position 14–17 (14–17 (YGHL)) interacts with substrate. Catalysis depends on Glu55, which acts as the Proton acceptor.

Belongs to the gamma-glutamylcyclotransferase family.

Putative gamma-glutamylcyclotransferase. The protein is Putative gamma-glutamylcyclotransferase BH1612 of Halalkalibacterium halodurans (strain ATCC BAA-125 / DSM 18197 / FERM 7344 / JCM 9153 / C-125) (Bacillus halodurans).